The chain runs to 394 residues: Protein TsgA homolog (394 aa).

Helical transmembrane passes span 11-31 (WISYLSYALTGALVIVTGIVM), 51-71 (FLNAGILISIFLNAWLMEIIP), 76-96 (LVFGFILMLIAIAGLMVGHNL), 101-121 (ISMFIFGVVSGITMSIGTFLV), 134-154 (LLFTDSFFSMAGMIFPIAAAM), 162-182 (WYWVYACIGLLYVGIFVLTLC), 206-226 (VGVLFLAIAALCYILGQLGFI), 246-266 (QLVSNFWISYMIGMWIFSFIL), 274-294 (IVTVLAAMATLAMYLFVSTDN), 302-322 (ILALGFVSSAIYTTLITLGSL), 334-354 (FILTCGTVGTMLTFVVTGPIV), and 363-383 (LETANGLYLAVFILCLALGFF).

The protein belongs to the major facilitator superfamily. TsgA family.

Its subcellular location is the cell inner membrane. This Yersinia pestis bv. Antiqua (strain Antiqua) protein is Protein TsgA homolog.